A 64-amino-acid chain; its full sequence is Protein sigN173 (64 aa).

This is Protein sigN173 from Dictyostelium discoideum (Social amoeba).